Consider the following 256-residue polypeptide: MRLTLFAFVLAVCALASNATLAPRTDDVLAEQLYMSVVIGEYETAIAKCSEYLKEKKGEVIKEAVKRLIENGKRNTMDFAYQLWTKDGKEIVKSYFPIQFRVIFTEQTVKLINKRDHHALKLIDQQNHNKIAFGDSKDKTSKKVSWKFTPVLENNRVYFKIMSTEDKQYLKLDNTKGSSDDRIIYGDSTADTFKHHWYLEPSMYESDVMFFVYNREYNSVMTLDEDMAANEDREALGHSGEVSGYPQLFAWYIVPY.

The N-terminal stretch at 1–19 (MRLTLFAFVLAVCALASNA) is a signal peptide.

This sequence belongs to the 30 kDa lipoprotein family.

The protein localises to the secreted. The sequence is that of Low molecular mass lipoprotein PBMHP-6 from Bombyx mori (Silk moth).